We begin with the raw amino-acid sequence, 267 residues long: Centromere protein Q (267 aa).

Basic residues-rich tracts occupy residues 1–22 (MSGK…LKQR) and 39–49 (KRNRSHAKHLS). The interval 1–54 (MSGKARASRKKPQQVKRSLKQRANKEADLPENEVGNTAKRNRSHAKHLSSKVTG) is disordered. Residue Ser-49 is modified to Phosphoserine. A coiled-coil region spans residues 100–202 (IKRKEEIQCH…EEQEVKQVFH (103 aa)).

It belongs to the CENP-Q/OKP1 family. As to quaternary structure, component of the CENPA-CAD complex, composed of CENPI, CENPK, CENPL, CENPO, CENPP, CENPQ, CENPR and CENPS. The CENPA-CAD complex interacts with the CENPA-NAC complex, at least composed of CENPA, CENPC, CENPH, CENPM, CENPN, CENPT and CENPU. Post-translationally, phosphorylation at Ser-49 is essential for CENPE recruitment to kinetochores and orderly chromosome congression.

The protein localises to the nucleus. It is found in the chromosome. The protein resides in the centromere. Its function is as follows. Component of the CENPA-CAD (nucleosome distal) complex, a complex recruited to centromeres which is involved in assembly of kinetochore proteins, mitotic progression and chromosome segregation. May be involved in incorporation of newly synthesized CENPA into centromeres via its interaction with the CENPA-NAC complex. Plays an important role in chromosome congression and in the recruitment of CENP-O complex (which comprises CENPO, CENPP, CENPQ and CENPU), CENPE and PLK1 to the kinetochores. In Mus musculus (Mouse), this protein is Centromere protein Q (Cenpq).